Here is a 129-residue protein sequence, read N- to C-terminus: Large ribosomal subunit protein bL19 (129 aa).

It belongs to the bacterial ribosomal protein bL19 family.

Functionally, this protein is located at the 30S-50S ribosomal subunit interface and may play a role in the structure and function of the aminoacyl-tRNA binding site. The protein is Large ribosomal subunit protein bL19 of Burkholderia mallei (strain NCTC 10247).